The primary structure comprises 550 residues: 2-succinyl-5-enolpyruvyl-6-hydroxy-3-cyclohexene-1-carboxylate synthase (550 aa).

It belongs to the TPP enzyme family. MenD subfamily. As to quaternary structure, homodimer. Mg(2+) serves as cofactor. Mn(2+) is required as a cofactor. The cofactor is thiamine diphosphate.

The enzyme catalyses isochorismate + 2-oxoglutarate + H(+) = 5-enolpyruvoyl-6-hydroxy-2-succinyl-cyclohex-3-ene-1-carboxylate + CO2. It participates in quinol/quinone metabolism; 1,4-dihydroxy-2-naphthoate biosynthesis; 1,4-dihydroxy-2-naphthoate from chorismate: step 2/7. The protein operates within quinol/quinone metabolism; menaquinone biosynthesis. Functionally, catalyzes the thiamine diphosphate-dependent decarboxylation of 2-oxoglutarate and the subsequent addition of the resulting succinic semialdehyde-thiamine pyrophosphate anion to isochorismate to yield 2-succinyl-5-enolpyruvyl-6-hydroxy-3-cyclohexene-1-carboxylate (SEPHCHC). This is 2-succinyl-5-enolpyruvyl-6-hydroxy-3-cyclohexene-1-carboxylate synthase from Desulfitobacterium hafniense (strain DSM 10664 / DCB-2).